A 208-amino-acid chain; its full sequence is MMNFNNVFRWHLPFLFLVLLTFRAAAADTLLILGDSLSAGYRMSASAAWPALLNDKWQSKTSVVNASISGDTSQQGLARLPALLKQHQPRWVLVELGGNDGLRGFQPQQTEQTLRQILQDVKAANAEPLLMQIRLPANYGRRYNEAFSAIYPKLAKEFDVPLLPFFMEEVYLKPQWMQDDGIHPNRDAQPFIADWMAKQLQPLVNHDS.

The first 26 residues, 1–26 (MMNFNNVFRWHLPFLFLVLLTFRAAA), serve as a signal peptide directing secretion. The active-site Nucleophile is S36. The substrate site is built by G70 and N99. Residues D180 and H183 contribute to the active site.

Belongs to the 'GDSL' lipolytic enzyme family. In terms of assembly, monomer or homotetramer.

It localises to the periplasm. It catalyses the reaction a fatty acyl-CoA + H2O = a fatty acid + CoA + H(+). The catalysed reaction is hexadecanoyl-CoA + H2O = hexadecanoate + CoA + H(+). The enzyme catalyses (9Z)-hexadecenoyl-CoA + H2O = (9Z)-hexadecenoate + CoA + H(+). It carries out the reaction octadecanoyl-CoA + H2O = octadecanoate + CoA + H(+). It catalyses the reaction (9Z)-octadecenoyl-CoA + H2O = (9Z)-octadecenoate + CoA + H(+). The catalysed reaction is (9Z)-octadecenoyl-[ACP] + H2O = (9Z)-octadecenoate + holo-[ACP] + H(+). The enzyme catalyses (11Z)-octadecenoyl-CoA + H2O = (11Z)-octadecenoate + CoA + H(+). It carries out the reaction tetradecanoyl-CoA + H2O = tetradecanoate + CoA + H(+). It catalyses the reaction (5Z,8Z,11Z,14Z)-eicosatetraenoyl-CoA + H2O = (5Z,8Z,11Z,14Z)-eicosatetraenoate + CoA + H(+). The catalysed reaction is dodecanoyl-CoA + H2O = dodecanoate + CoA + H(+). The enzyme catalyses decanoyl-CoA + H2O = decanoate + CoA + H(+). It carries out the reaction hexanoyl-CoA + H2O = hexanoate + CoA + H(+). It catalyses the reaction a 1-acyl-sn-glycero-3-phosphocholine + H2O = sn-glycerol 3-phosphocholine + a fatty acid + H(+). The catalysed reaction is a phenyl acetate + H2O = a phenol + acetate + H(+). The enzyme catalyses a butanoate ester + H2O = an aliphatic alcohol + butanoate + H(+). It carries out the reaction a hexanoate ester + H2O = an aliphatic alcohol + hexanoate + H(+). It catalyses the reaction an octanoate ester + H2O = an aliphatic alcohol + octanoate + H(+). Functionally, tesA is a multifunctional esterase that can act as a thioesterase, arylesterase, lysophospholipase and protease. The chain is Thioesterase 1/protease 1/lysophospholipase L1 (tesA) from Escherichia coli O6:H1 (strain CFT073 / ATCC 700928 / UPEC).